Here is a 394-residue protein sequence, read N- to C-terminus: MHIRSLELRDYRSWPELKVDLEPGITVFIGRNGFGKTNIVEAIGYLAHLSSHRVSSDAPLVRAHAENARVSAVAVNQGRELAAHLLIKPHAANQASLNRTKVRTPRELLGVVKTVLFAPEDLALVKGEPAERRRYLDDIIATRQPRMAGVKADYDKVLKQRNALLKTATIALRRGYGTEEGAAALSTLDTWDGQLARLGAEVMAARFALLNELGPKIYEAYTTIAPESRPAAVNYKTTIDQGLSQFSEFDAGIIEATLLTELAAKRQREIERGSSLVGPHRDDVDLMLGDQPAKGFASHGETWSFALSLRIAEFNLLKSDGTDPILILDDVFSELDAGRREKLVGIAQEVEQVLITAAVHDDLPENLKKVLTAQHTVTVQDTGTGRISLLDVQP.

Gly30–Thr37 lines the ATP pocket.

Belongs to the RecF family.

It is found in the cytoplasm. Functionally, the RecF protein is involved in DNA metabolism; it is required for DNA replication and normal SOS inducibility. RecF binds preferentially to single-stranded, linear DNA. It also seems to bind ATP. This Corynebacterium glutamicum (strain ATCC 13032 / DSM 20300 / JCM 1318 / BCRC 11384 / CCUG 27702 / LMG 3730 / NBRC 12168 / NCIMB 10025 / NRRL B-2784 / 534) protein is DNA replication and repair protein RecF.